Here is a 455-residue protein sequence, read N- to C-terminus: Histone chaperone RTT106 (455 aa).

Residue S2 is modified to N-acetylserine. The interval 2 to 67 is dimeric region; the sequence is SKLFLDELPE…SSDLLKTDEI (66 aa). PH domains lie at 68–200 and 217–301; these read SETN…GFKI and INSF…VKRK. Residues 68–301 are double PH domain; the sequence is SETNTIFKLE…AKIDDYVKRK (234 aa). A compositionally biased stretch (basic and acidic residues) spans 305 to 314; sequence DKSMSEELKA. The segment at 305–455 is disordered; it reads DKSMSEELKA…DEDGSGVEYD (151 aa). The segment covering 319-339 has biased composition (polar residues); sequence KGQATDGTADQPSILQEATRQ. Acidic residues-rich tracts occupy residues 350-366 and 376-395; these read SDDD…ESDL and DGAE…DEEE. Polar residues predominate over residues 402–418; it reads ALNRDNSFASINGQPEQ. Phosphoserine is present on residues S408 and S411. Basic and acidic residues predominate over residues 420–429; sequence LQYKEFKEPL. Residues 430 to 455 are compositionally biased toward acidic residues; the sequence is ELEDIPIEIGNDDDEDDEDGSGVEYD. Phosphoserine is present on S450.

It belongs to the RTT106 family. In terms of assembly, interacts with the SWI/SNF, RSC and HIR complexes. Interacts with RLF2, SIR4, YTA7 and histones H3 and H4.

It localises to the nucleus. The protein resides in the chromosome. Functionally, histones H3 and H4 chaperone involved in the nucleosome formation and heterochromatin silencing. Required for the deposition of H3K56ac-carrying H3-H4 complex onto newly-replicated DNA. Plays a role in the transcriptional regulation of the cell-cycle dependent histone genes by directly recruiting the SWI/SNF and RSC chromatin remodeling complexes to the histone genes in a cell cycle dependent manner. In cooperation with HIR and ASF1, creates a repressive structure at the core histone gene promoter and contributes to their repression outside of S phase. Involved in regulation of Ty1 transposition. This Saccharomyces cerevisiae (strain YJM789) (Baker's yeast) protein is Histone chaperone RTT106 (RTT106).